The chain runs to 120 residues: NAD(P)H-quinone oxidoreductase subunit 3 (120 aa).

The next 3 membrane-spanning stretches (helical) occupy residues 10–30 (FLGF…TNLI), 64–84 (MFAL…PWAV), and 89–109 (LGLL…IALA).

The protein belongs to the complex I subunit 3 family. NDH-1 can be composed of about 15 different subunits; different subcomplexes with different compositions have been identified which probably have different functions.

Its subcellular location is the cellular thylakoid membrane. The catalysed reaction is a plastoquinone + NADH + (n+1) H(+)(in) = a plastoquinol + NAD(+) + n H(+)(out). It carries out the reaction a plastoquinone + NADPH + (n+1) H(+)(in) = a plastoquinol + NADP(+) + n H(+)(out). NDH-1 shuttles electrons from an unknown electron donor, via FMN and iron-sulfur (Fe-S) centers, to quinones in the respiratory and/or the photosynthetic chain. The immediate electron acceptor for the enzyme in this species is believed to be plastoquinone. Couples the redox reaction to proton translocation, and thus conserves the redox energy in a proton gradient. Cyanobacterial NDH-1 also plays a role in inorganic carbon-concentration. This Prochlorococcus marinus (strain MIT 9215) protein is NAD(P)H-quinone oxidoreductase subunit 3.